The primary structure comprises 337 residues: MTHQVSVLHQDKKFDIALRPKGLREFCGQAQLTERLELFLSAALQRGEVPGHCLFFGPPGLGKTSLAHIVARTVGKGLVVASGPQLVKPSDLLGLLTSLQEGDVFFIDEIHRMGKVAEEYLYSAMEDYKIDITIDSGPGARSISVDLAPFSLVGATTRSGMLSEPLRARFSFSGRVSYYSDEDLATILKRSSNLLGIDADAAALYEIARRSRGTPRLANNLLRWVRDFAQMREGNRINSDVAEKALSMLLIDDWGLNEIDIKLLTTIIDYYQGGPVGIKTLSVAVGEDIKTLEDVYEPFLILKGLLKKTSRGRMVTQLAYNHLKRCSDNLQILGEEK.

The large ATPase domain (RuvB-L) stretch occupies residues 1-179 (MTHQVSVLHQ…FSFSGRVSYY (179 aa)). Residues L18, R19, G60, K63, T64, S65, 126 to 128 (EDY), R169, Y179, and R216 each bind ATP. T64 contributes to the Mg(2+) binding site. Positions 180–250 (SDEDLATILK…VAEKALSMLL (71 aa)) are small ATPAse domain (RuvB-S). The tract at residues 253-337 (DWGLNEIDIK…DNLQILGEEK (85 aa)) is head domain (RuvB-H). DNA-binding residues include K308 and R313.

It belongs to the RuvB family. Homohexamer. Forms an RuvA(8)-RuvB(12)-Holliday junction (HJ) complex. HJ DNA is sandwiched between 2 RuvA tetramers; dsDNA enters through RuvA and exits via RuvB. An RuvB hexamer assembles on each DNA strand where it exits the tetramer. Each RuvB hexamer is contacted by two RuvA subunits (via domain III) on 2 adjacent RuvB subunits; this complex drives branch migration. In the full resolvosome a probable DNA-RuvA(4)-RuvB(12)-RuvC(2) complex forms which resolves the HJ.

The protein resides in the cytoplasm. The catalysed reaction is ATP + H2O = ADP + phosphate + H(+). Functionally, the RuvA-RuvB-RuvC complex processes Holliday junction (HJ) DNA during genetic recombination and DNA repair, while the RuvA-RuvB complex plays an important role in the rescue of blocked DNA replication forks via replication fork reversal (RFR). RuvA specifically binds to HJ cruciform DNA, conferring on it an open structure. The RuvB hexamer acts as an ATP-dependent pump, pulling dsDNA into and through the RuvAB complex. RuvB forms 2 homohexamers on either side of HJ DNA bound by 1 or 2 RuvA tetramers; 4 subunits per hexamer contact DNA at a time. Coordinated motions by a converter formed by DNA-disengaged RuvB subunits stimulates ATP hydrolysis and nucleotide exchange. Immobilization of the converter enables RuvB to convert the ATP-contained energy into a lever motion, pulling 2 nucleotides of DNA out of the RuvA tetramer per ATP hydrolyzed, thus driving DNA branch migration. The RuvB motors rotate together with the DNA substrate, which together with the progressing nucleotide cycle form the mechanistic basis for DNA recombination by continuous HJ branch migration. Branch migration allows RuvC to scan DNA until it finds its consensus sequence, where it cleaves and resolves cruciform DNA. The chain is Holliday junction branch migration complex subunit RuvB from Chlamydia felis (strain Fe/C-56) (Chlamydophila felis).